The primary structure comprises 102 residues: CRISPR-associated endoribonuclease Cas2 (102 aa).

D8 is a Mg(2+) binding site.

The protein belongs to the CRISPR-associated endoribonuclease Cas2 protein family. As to quaternary structure, homodimer, forms a heterotetramer with a Cas1 homodimer. Requires Mg(2+) as cofactor.

Functionally, CRISPR (clustered regularly interspaced short palindromic repeat), is an adaptive immune system that provides protection against mobile genetic elements (viruses, transposable elements and conjugative plasmids). CRISPR clusters contain sequences complementary to antecedent mobile elements and target invading nucleic acids. CRISPR clusters are transcribed and processed into CRISPR RNA (crRNA). Functions as a ssRNA-specific endoribonuclease. Involved in the integration of spacer DNA into the CRISPR cassette. The polypeptide is CRISPR-associated endoribonuclease Cas2 (Acidovorax ebreus (strain TPSY) (Diaphorobacter sp. (strain TPSY))).